A 697-amino-acid chain; its full sequence is tRNA 5-methylaminomethyl-2-thiouridine biosynthesis bifunctional protein MnmC (697 aa).

The tract at residues 1 to 269 is tRNA (mnm(5)s(2)U34)-methyltransferase; sequence MNKTPLLSVS…LRQQLQQQFA (269 aa). Residues 287–697 are FAD-dependent cmnm(5)s(2)U34 oxidoreductase; it reads IGGGIASASL…RKLLKGKALM (411 aa).

The protein in the N-terminal section; belongs to the methyltransferase superfamily. tRNA (mnm(5)s(2)U34)-methyltransferase family. In the C-terminal section; belongs to the DAO family. The cofactor is FAD.

It localises to the cytoplasm. The catalysed reaction is 5-aminomethyl-2-thiouridine(34) in tRNA + S-adenosyl-L-methionine = 5-methylaminomethyl-2-thiouridine(34) in tRNA + S-adenosyl-L-homocysteine + H(+). Functionally, catalyzes the last two steps in the biosynthesis of 5-methylaminomethyl-2-thiouridine (mnm(5)s(2)U) at the wobble position (U34) in tRNA. Catalyzes the FAD-dependent demodification of cmnm(5)s(2)U34 to nm(5)s(2)U34, followed by the transfer of a methyl group from S-adenosyl-L-methionine to nm(5)s(2)U34, to form mnm(5)s(2)U34. The polypeptide is tRNA 5-methylaminomethyl-2-thiouridine biosynthesis bifunctional protein MnmC (Shewanella frigidimarina (strain NCIMB 400)).